We begin with the raw amino-acid sequence, 446 residues long: Tubulin beta-6 chain (446 aa).

The MREI motif signature appears at 1 to 4 (MREI). 6 residues coordinate GTP: Gln11, Glu69, Ser138, Gly142, Thr143, and Gly144. Position 69 (Glu69) interacts with Mg(2+). Residue Ser172 is modified to Phosphoserine; by CDK1. 2 residues coordinate GTP: Asn204 and Asn226. Glu438 is modified (5-glutamyl polyglutamate).

Belongs to the tubulin family. As to quaternary structure, dimer of alpha and beta chains. A typical microtubule is a hollow water-filled tube with an outer diameter of 25 nm and an inner diameter of 15 nM. Alpha-beta heterodimers associate head-to-tail to form protofilaments running lengthwise along the microtubule wall with the beta-tubulin subunit facing the microtubule plus end conferring a structural polarity. Microtubules usually have 13 protofilaments but different protofilament numbers can be found in some organisms and specialized cells. It depends on Mg(2+) as a cofactor. In terms of processing, some glutamate residues at the C-terminus are polyglycylated, resulting in polyglycine chains on the gamma-carboxyl group. Glycylation is mainly limited to tubulin incorporated into axonemes (cilia and flagella) whereas glutamylation is prevalent in neuronal cells, centrioles, axonemes, and the mitotic spindle. Both modifications can coexist on the same protein on adjacent residues, and lowering polyglycylation levels increases polyglutamylation, and reciprocally. Cilia and flagella glycylation is required for their stability and maintenance. Flagella glycylation controls sperm motility. Some glutamate residues at the C-terminus are polyglutamylated, resulting in polyglutamate chains on the gamma-carboxyl group. Polyglutamylation plays a key role in microtubule severing by spastin (SPAST). SPAST preferentially recognizes and acts on microtubules decorated with short polyglutamate tails: severing activity by SPAST increases as the number of glutamates per tubulin rises from one to eight, but decreases beyond this glutamylation threshold. Glutamylation is also involved in cilia motility. Post-translationally, phosphorylated on Ser-172 by CDK1 during the cell cycle, from metaphase to telophase, but not in interphase. This phosphorylation inhibits tubulin incorporation into microtubules.

It localises to the cytoplasm. The protein resides in the cytoskeleton. Tubulin is the major constituent of microtubules, a cylinder consisting of laterally associated linear protofilaments composed of alpha- and beta-tubulin heterodimers. Microtubules grow by the addition of GTP-tubulin dimers to the microtubule end, where a stabilizing cap forms. Below the cap, tubulin dimers are in GDP-bound state, owing to GTPase activity of alpha-tubulin. The polypeptide is Tubulin beta-6 chain (TUBB6) (Bos taurus (Bovine)).